A 362-amino-acid chain; its full sequence is F-box protein At2g14710 (362 aa).

The F-box domain occupies 1–47; sequence MAHLKNLPWELIEEILSRVPPKSLVRFRTVSKQWNALFDDKTFINNH.

This chain is F-box protein At2g14710, found in Arabidopsis thaliana (Mouse-ear cress).